The following is a 301-amino-acid chain: tRNA uridine(34) hydroxylase (301 aa).

The region spanning 121-212 (NDKDTLVLDS…YLKNIKKKES (92 aa)) is the Rhodanese domain. The Cysteine persulfide intermediate role is filled by C172.

Belongs to the TrhO family.

It carries out the reaction uridine(34) in tRNA + AH2 + O2 = 5-hydroxyuridine(34) in tRNA + A + H2O. Catalyzes oxygen-dependent 5-hydroxyuridine (ho5U) modification at position 34 in tRNAs. The sequence is that of tRNA uridine(34) hydroxylase from Pelagibacter ubique (strain HTCC1062).